The chain runs to 86 residues: Candiduxin-1 (86 aa).

Residues 1 to 21 (MKTLLLTLVVLTIACLDLGYT) form the signal peptide. 4 disulfide bridges follow: Cys24–Cys45, Cys38–Cys62, Cys66–Cys78, and Cys79–Cys84.

Belongs to the three-finger toxin family. Short-chain subfamily. Orphan group IX sub-subfamily. Expressed by the venom gland.

It is found in the secreted. This is Candiduxin-1 from Bungarus candidus (Malayan krait).